The chain runs to 228 residues: Cytidylate kinase (228 aa).

11–19 (GPAGTGKSS) serves as a coordination point for ATP.

The protein belongs to the cytidylate kinase family. Type 1 subfamily.

The protein localises to the cytoplasm. The catalysed reaction is CMP + ATP = CDP + ADP. It catalyses the reaction dCMP + ATP = dCDP + ADP. The chain is Cytidylate kinase from Mycobacterium avium (strain 104).